We begin with the raw amino-acid sequence, 113 residues long: uncharacterized protein (113 aa).

The interval 94–113 (SKTGLDEQAHVQKAHDVQDV) is disordered. Residues 96 to 113 (TGLDEQAHVQKAHDVQDV) are compositionally biased toward basic and acidic residues.

The protein belongs to the geminiviridae protein AV2/V2 family. As to quaternary structure, interacts with host SGS3.

It localises to the host cytoplasm. It is found in the host perinuclear region. In terms of biological role, through its interaction with host SGS3, acts as a suppressor of RNA-mediated gene silencing, also known as post-transcriptional gene silencing (PTGS), a mechanism of plant viral defense that limits the accumulation of viral RNAs. This is an uncharacterized protein from African cassava mosaic virus (isolate Nigerian) (ACMV).